Consider the following 262-residue polypeptide: Thiazole synthase (262 aa).

The active-site Schiff-base intermediate with DXP is Lys96. Residues Gly157, 184–185 (AG), and 206–207 (NT) contribute to the 1-deoxy-D-xylulose 5-phosphate site.

Belongs to the ThiG family. Homotetramer. Forms heterodimers with either ThiH or ThiS.

It is found in the cytoplasm. It carries out the reaction [ThiS sulfur-carrier protein]-C-terminal-Gly-aminoethanethioate + 2-iminoacetate + 1-deoxy-D-xylulose 5-phosphate = [ThiS sulfur-carrier protein]-C-terminal Gly-Gly + 2-[(2R,5Z)-2-carboxy-4-methylthiazol-5(2H)-ylidene]ethyl phosphate + 2 H2O + H(+). The protein operates within cofactor biosynthesis; thiamine diphosphate biosynthesis. Functionally, catalyzes the rearrangement of 1-deoxy-D-xylulose 5-phosphate (DXP) to produce the thiazole phosphate moiety of thiamine. Sulfur is provided by the thiocarboxylate moiety of the carrier protein ThiS. In vitro, sulfur can be provided by H(2)S. The chain is Thiazole synthase from Legionella pneumophila (strain Corby).